The chain runs to 345 residues: Phosphoribosylformylglycinamidine cyclo-ligase (345 aa).

Belongs to the AIR synthase family.

It localises to the cytoplasm. It carries out the reaction 2-formamido-N(1)-(5-O-phospho-beta-D-ribosyl)acetamidine + ATP = 5-amino-1-(5-phospho-beta-D-ribosyl)imidazole + ADP + phosphate + H(+). The protein operates within purine metabolism; IMP biosynthesis via de novo pathway; 5-amino-1-(5-phospho-D-ribosyl)imidazole from N(2)-formyl-N(1)-(5-phospho-D-ribosyl)glycinamide: step 2/2. This Synechococcus sp. (strain CC9605) protein is Phosphoribosylformylglycinamidine cyclo-ligase.